Reading from the N-terminus, the 209-residue chain is Probable glutathione peroxidase 8-A (209 aa).

A helical membrane pass occupies residues 18–40 (VSVVFLSMLLCTGILCVLQLGFL). Cys79 is a catalytic residue.

The protein belongs to the glutathione peroxidase family.

It localises to the membrane. It carries out the reaction 2 glutathione + H2O2 = glutathione disulfide + 2 H2O. This is Probable glutathione peroxidase 8-A (gpx8-a) from Xenopus laevis (African clawed frog).